Consider the following 184-residue polypeptide: Adenylate kinase (184 aa).

An ATP-binding site is contributed by 12 to 17 (GAGKGT). The tract at residues 32–61 (STGELLRKEIDLDTDLGKQVKDIMNRGELV) is NMP. Residues T33, R38, 59 to 61 (ELV), 85 to 88 (GYPR), and Q92 each bind AMP. An LID region spans residues 126 to 132 (IRGRKDD). R127 is a binding site for ATP. AMP-binding residues include R129 and R140. G168 serves as a coordination point for ATP.

It belongs to the adenylate kinase family. As to quaternary structure, monomer.

The protein resides in the cytoplasm. The enzyme catalyses AMP + ATP = 2 ADP. It functions in the pathway purine metabolism; AMP biosynthesis via salvage pathway; AMP from ADP: step 1/1. Functionally, catalyzes the reversible transfer of the terminal phosphate group between ATP and AMP. Plays an important role in cellular energy homeostasis and in adenine nucleotide metabolism. The sequence is that of Adenylate kinase from Prochlorococcus marinus subsp. pastoris (strain CCMP1986 / NIES-2087 / MED4).